The following is a 525-amino-acid chain: GMP synthase [glutamine-hydrolyzing] (525 aa).

One can recognise a Glutamine amidotransferase type-1 domain in the interval 16–205 (PVLVVDFGAQ…LHDFAGLGAQ (190 aa)). The active-site Nucleophile is the Cys93. Residues His179 and Glu181 contribute to the active site. The GMPS ATP-PPase domain maps to 206-399 (WTPANIANAL…LGLPEEIVAR (194 aa)). An ATP-binding site is contributed by 233–239 (SGGVDSA).

In terms of assembly, homodimer.

The catalysed reaction is XMP + L-glutamine + ATP + H2O = GMP + L-glutamate + AMP + diphosphate + 2 H(+). The protein operates within purine metabolism; GMP biosynthesis; GMP from XMP (L-Gln route): step 1/1. Its function is as follows. Catalyzes the synthesis of GMP from XMP. This chain is GMP synthase [glutamine-hydrolyzing] (guaA), found in Mycobacterium tuberculosis (strain CDC 1551 / Oshkosh).